Here is a 675-residue protein sequence, read N- to C-terminus: MLRATAPCWFPPGYPEAKKVAEEAALEASRHLGGEQSQAGAPEGSKMLRATAPCWFRPGYPEAKKVAKEAAPEASRHLGAEQSPAGAPEGSKMLRATAPCWFPPGYPEAKKVAEEAALEAPEFPLPSHQPAQSFGLWVPQMHKQASAFVDIQAEPQNRGPAVPPAWPKMVTESCYFPAQRGSACRLPAAPRLTERPSGVRISAPRKRKTIAHSSSPCLVTGYTDAKRTRVASSSQRSRGSKVGRQPGKTRNRSGMACKTTATTSSKRIVRRASLPSLSLKKPIILRSSGCQVPTVLRRGYLQLFTEECLKFCASKQEAEEKALNEEKVAYDCSPNKNRYLNVVLNTLKRLKGLTPSSMPGLSRAALYSRLQEFLLTQDQLKENGYPFPHPERPGGAVLFTGQGKGPGDSSCRVCCRCGTEYLVSSSGRCVRDQLCYYHWGRVRSSQVAGGRVSQYTCCAAAPGSVGCQVAKQHVRDGRKESLDGFVETFKKELSRDAYPGIYALDCEMCYTTHGLELTRVTVVDADMRVVYDTFVKPDNEIVDYNTRFSGVTEADVAKTSITLPQVQAILLSFFSAQTILIGHSLESDLLALKLIHSTVVDTAVLFPHYLGFPYKRSLRNLAADYLAQIIQDSQDGHNSSEDASACLQLVMWKVRQRAQIQPRHRSASPAALACP.

Residues 66 to 79 show a composition bias toward basic and acidic residues; the sequence is VAKEAAPEASRHLG. 2 disordered regions span residues 66–90 and 225–263; these read VAKE…APEG and AKRT…TATT. The tract at residues 358–483 is GOR1-125 epitope; sequence MPGLSRAALY…VRDGRKESLD (126 aa).

This sequence belongs to the REXO1/REXO3 family.

It is found in the cytoplasm. The protein localises to the nucleus. The chain is Putative exonuclease GOR (REXO1L1P) from Homo sapiens (Human).